The primary structure comprises 138 residues: DNA-directed RNA polymerase subunit omega (138 aa).

It belongs to the RNA polymerase subunit omega family. The RNAP catalytic core consists of 2 alpha, 1 beta, 1 beta' and 1 omega subunit. When a sigma factor is associated with the core the holoenzyme is formed, which can initiate transcription.

It catalyses the reaction RNA(n) + a ribonucleoside 5'-triphosphate = RNA(n+1) + diphosphate. Its function is as follows. Promotes RNA polymerase assembly. Latches the N- and C-terminal regions of the beta' subunit thereby facilitating its interaction with the beta and alpha subunits. In Thermodesulfovibrio yellowstonii (strain ATCC 51303 / DSM 11347 / YP87), this protein is DNA-directed RNA polymerase subunit omega.